A 502-amino-acid polypeptide reads, in one-letter code: High affinity nitrate transporter 2.5 (502 aa).

Transmembrane regions (helical) follow at residues 51–71 (WFQFFCCFVSTFAAPPLLPVI), 87–107 (IASVSGAVFARIVMGTACDLF), 111–131 (LASAALTLSTAPAVYFTAGIK), 133–153 (PIGFIMVRFFAGFSLATFVST), 172–192 (IAAGWGNLGGGATQLIMPIVF), 208–228 (IAFFIPGLFQTLSAFAVLLFG), 264–284 (WITALAYGYCFGVELTIDNII), 300–320 (GIIAASFGLANFFARPGGGIF), 334–354 (LWAWWIVQTSGGVLCACLGQI), 361–381 (IIVMLVFSVFVQAACGLTFGV), 393–413 (VSGMTGAGGNVGAVLTQLIFF), and 423–443 (GITLMGVMSIACSLPICLIYF). The disordered stretch occupies residues 477–502 (LHIGSQKFAETSISERGRATTTHPQT).

The protein belongs to the major facilitator superfamily. Nitrate/nitrite porter (TC 2.A.1.8) family. Oligomeric molecular complex with NRT3.1. In terms of tissue distribution, expressed in roots, shoots and seeds. Expressed in leaves. Expressed in root hair zone of the primary root and the lateral roots, but not in the lateral root tip or in older parts of the roots. Detected mainly in the epidermis and the cortex. Expressed in shoots only in higher-order veins.

The protein localises to the cell membrane. Its function is as follows. Nitrate transporter involved in the constitutive high-affinity transport system (cHATS) under long-term N starvation conditions. Predominantly expressed in roots of nitrate-deprived plants as a 150 kDa molecular complex with NRT3.1 representing the major contributor to cHATS influx. The principal role of this cHATS is to enable roots previously deprived of nitrate to absorb this ion and initiate induction of nitrate-inducible genes. Not involved in transfer of nitrate from roots to shoots. Contributes to phloem loading of nitrate in shoots during N starvation, but not required for growth and nitrate uptake in young plants. Required for the nitrate uptake-independent plant growth promotion and lateral root response to the rhizospheric Phyllobacterium. Might be involved in the transfer of nitrate from stored pools to cytoplasm. In Arabidopsis thaliana (Mouse-ear cress), this protein is High affinity nitrate transporter 2.5 (NRT2.5).